A 379-amino-acid polypeptide reads, in one-letter code: Protein RecA (379 aa).

79-86 provides a ligand contact to ATP; it reads GPESSGKT.

It belongs to the RecA family.

Its subcellular location is the cytoplasm. Its function is as follows. Can catalyze the hydrolysis of ATP in the presence of single-stranded DNA, the ATP-dependent uptake of single-stranded DNA by duplex DNA, and the ATP-dependent hybridization of homologous single-stranded DNAs. It interacts with LexA causing its activation and leading to its autocatalytic cleavage. This Streptococcus thermophilus protein is Protein RecA.